Consider the following 44-residue polypeptide: Photosystem I reaction center subunit IX (44 aa).

Residues Y7–I27 traverse the membrane as a helical segment.

The protein belongs to the PsaJ family.

It is found in the plastid. Its subcellular location is the chloroplast thylakoid membrane. Functionally, may help in the organization of the PsaE and PsaF subunits. The protein is Photosystem I reaction center subunit IX of Populus alba (White poplar).